A 648-amino-acid polypeptide reads, in one-letter code: Macrolide export ATP-binding/permease protein MacB (648 aa).

One can recognise an ABC transporter domain in the interval 5–243 (LELKDIRRSY…TGGTEPVVNT (239 aa)). Residue 41 to 48 (GASGSGKS) coordinates ATP. The next 4 membrane-spanning stretches (helical) occupy residues 273 to 293 (LLTM…VVVG), 523 to 543 (LFLT…VMNI), 576 to 596 (AVLV…LIAF), and 611 to 631 (PLAL…FGWL).

This sequence belongs to the ABC transporter superfamily. Macrolide exporter (TC 3.A.1.122) family. As to quaternary structure, homodimer. Part of the tripartite efflux system MacAB-TolC, which is composed of an inner membrane transporter, MacB, a periplasmic membrane fusion protein, MacA, and an outer membrane component, TolC. The complex forms a large protein conduit and can translocate molecules across both the inner and outer membranes. Interacts with MacA.

It is found in the cell inner membrane. Its function is as follows. Part of the tripartite efflux system MacAB-TolC. MacB is a non-canonical ABC transporter that contains transmembrane domains (TMD), which form a pore in the inner membrane, and an ATP-binding domain (NBD), which is responsible for energy generation. Confers resistance against macrolides. This is Macrolide export ATP-binding/permease protein MacB from Escherichia coli O6:K15:H31 (strain 536 / UPEC).